We begin with the raw amino-acid sequence, 355 residues long: tRNA-specific 2-thiouridylase MnmA (355 aa).

Residues 7-14 (GLSGGVDS) and Leu33 each bind ATP. Catalysis depends on Cys94, which acts as the Nucleophile. A disulfide bond links Cys94 and Cys193. Residue Gly119 coordinates ATP. Residues 143–145 (KDQ) form an interaction with tRNA region. Residue Cys193 is the Cysteine persulfide intermediate of the active site. The interval 298 to 299 (RY) is interaction with tRNA.

Belongs to the MnmA/TRMU family.

The protein resides in the cytoplasm. It catalyses the reaction S-sulfanyl-L-cysteinyl-[protein] + uridine(34) in tRNA + AH2 + ATP = 2-thiouridine(34) in tRNA + L-cysteinyl-[protein] + A + AMP + diphosphate + H(+). Functionally, catalyzes the 2-thiolation of uridine at the wobble position (U34) of tRNA, leading to the formation of s(2)U34. This chain is tRNA-specific 2-thiouridylase MnmA, found in Acaryochloris marina (strain MBIC 11017).